We begin with the raw amino-acid sequence, 376 residues long: MYG1 exonuclease (376 aa).

The N-terminal 47 residues, 1–47 (MGHRFLRGLLTLLLPPPPLYTRHRMLGPESVPPPKRSRSKLMAPPRI), are a transit peptide targeting the mitochondrion. S120 carries the post-translational modification Phosphoserine. 2 positions are modified to N6-acetyllysine: K267 and K273.

It belongs to the MYG1 family. As to expression, ubiquitously expressed, with highest levels in testis.

The protein resides in the nucleus. The protein localises to the nucleoplasm. It localises to the mitochondrion matrix. It is found in the nucleolus. Its function is as follows. 3'-5' RNA exonuclease which cleaves in situ on specific transcripts in both nucleus and mitochondrion. Involved in regulating spatially segregated organellar RNA processing, acts as a coordinator of nucleo-mitochondrial crosstalk. In nucleolus, processes pre-ribosomal RNA involved in ribosome assembly and alters cytoplasmic translation. In mitochondrial matrix, processes 3'-termini of the mito-ribosomal and messenger RNAs and controls translation of mitochondrial proteins. The polypeptide is MYG1 exonuclease (Homo sapiens (Human)).